The chain runs to 337 residues: Fructose-1,6-bisphosphatase class 1 (337 aa).

Mg(2+) is bound by residues E94, D116, L118, and D119. Residues D119–S122, N210, and K276 contribute to the substrate site. E282 provides a ligand contact to Mg(2+).

This sequence belongs to the FBPase class 1 family. Homotetramer. Mg(2+) is required as a cofactor.

Its subcellular location is the cytoplasm. It carries out the reaction beta-D-fructose 1,6-bisphosphate + H2O = beta-D-fructose 6-phosphate + phosphate. Its pathway is carbohydrate biosynthesis; gluconeogenesis. This is Fructose-1,6-bisphosphatase class 1 from Burkholderia lata (strain ATCC 17760 / DSM 23089 / LMG 22485 / NCIMB 9086 / R18194 / 383).